The sequence spans 828 residues: DNA gyrase subunit A (828 aa).

The 466-residue stretch at 32–497 (LPDVRDGLKP…EVLSLEDEDL (466 aa)) folds into the Topo IIA-type catalytic domain. Tyr-120 functions as the O-(5'-phospho-DNA)-tyrosine intermediate in the catalytic mechanism. Residues 524-530 (QKRGGRG) carry the GyrA-box motif.

It belongs to the type II topoisomerase GyrA/ParC subunit family. As to quaternary structure, heterotetramer, composed of two GyrA and two GyrB chains. In the heterotetramer, GyrA contains the active site tyrosine that forms a transient covalent intermediate with DNA, while GyrB binds cofactors and catalyzes ATP hydrolysis.

The protein localises to the cytoplasm. The catalysed reaction is ATP-dependent breakage, passage and rejoining of double-stranded DNA.. A type II topoisomerase that negatively supercoils closed circular double-stranded (ds) DNA in an ATP-dependent manner to modulate DNA topology and maintain chromosomes in an underwound state. Negative supercoiling favors strand separation, and DNA replication, transcription, recombination and repair, all of which involve strand separation. Also able to catalyze the interconversion of other topological isomers of dsDNA rings, including catenanes and knotted rings. Type II topoisomerases break and join 2 DNA strands simultaneously in an ATP-dependent manner. In Streptococcus pyogenes serotype M18 (strain MGAS8232), this protein is DNA gyrase subunit A.